Consider the following 427-residue polypeptide: Vitamin D3 receptor (427 aa).

The nuclear receptor DNA-binding region spans Pro-21 to Thr-96. Positions 24, 27, 41, 44, 60, 66, 76, and 79 each coordinate Zn(2+). 2 NR C4-type zinc fingers span residues Cys-24–Cys-44 and Cys-60–Cys-79. Residues Asp-97–Glu-126 are hinge. The 297-residue stretch at Glu-127–Gly-423 folds into the NR LBD domain. Tyr-143 provides a ligand contact to calcitriol. Positions Asp-149–Ser-201 are disordered. Residues Ser-168 to Ser-193 are compositionally biased toward low complexity. Ser-237 provides a ligand contact to calcitriol. Residues Lys-246 to Lys-264 form an interaction with coactivator LXXLL motif region. Positions 274, 278, 305, and 397 each coordinate calcitriol. A 9aaTAD motif is present at residues Pro-416–Asn-424.

It belongs to the nuclear hormone receptor family. NR1 subfamily. As to quaternary structure, homodimer in the absence of bound vitamin D3. Heterodimer with RXRA after vitamin D3 binding. Interacts with MED1, NCOA1, NCOA2, NCOA3 and NCOA6 coactivators, leading to a strong increase of transcription of target genes. Interacts with the corepressor NCOR1. Interacts with SNW1. Interacts with IRX4, the interaction does not affect its transactivation activity. Interacts with CRY1. Interacts with CRY2 in a ligand-dependent manner. Post-translationally, ubiquitinated by UBR5, leading to its degradation: UBR5 specifically recognizes and binds ligand-bound VDR when it is not associated with coactivators (NCOAs). In presence of NCOAs, the UBR5-degron is not accessible, preventing its ubiquitination and degradation.

It localises to the nucleus. Its subcellular location is the cytoplasm. Its function is as follows. Nuclear receptor for calcitriol, the active form of vitamin D3 which mediates the action of this vitamin on cells. Enters the nucleus upon vitamin D3 binding where it forms heterodimers with the retinoid X receptor/RXR. The VDR-RXR heterodimers bind to specific response elements on DNA and activate the transcription of vitamin D3-responsive target genes. Plays a central role in calcium homeostasis. Also functions as a receptor for the secondary bile acid lithocholic acid (LCA) and its metabolites. The protein is Vitamin D3 receptor (VDR) of Sus scrofa (Pig).